A 127-amino-acid chain; its full sequence is Prefoldin subunit 6 (127 aa).

Ala2 bears the N-acetylalanine mark. Lys21 bears the N6-acetyllysine mark. Lys66 carries the post-translational modification N6-acetyllysine; alternate. Lys66 participates in a covalent cross-link: Glycyl lysine isopeptide (Lys-Gly) (interchain with G-Cter in SUMO1); alternate. Lys66 participates in a covalent cross-link: Glycyl lysine isopeptide (Lys-Gly) (interchain with G-Cter in SUMO2); alternate.

The protein belongs to the prefoldin subunit beta family. As to quaternary structure, heterohexamer of two PFD-alpha type and four PFD-beta type subunits. Component of the PAQosome complex which is responsible for the biogenesis of several protein complexes and which consists of R2TP complex members RUVBL1, RUVBL2, RPAP3 and PIH1D1, URI complex members PFDN2, PFDN6, PDRG1, UXT and URI1 as well as ASDURF, POLR2E and DNAAF10/WDR92.

Functionally, binds specifically to cytosolic chaperonin (c-CPN) and transfers target proteins to it. Binds to nascent polypeptide chain and promotes folding in an environment in which there are many competing pathways for nonnative proteins. The chain is Prefoldin subunit 6 (Pfdn6) from Mus musculus (Mouse).